Here is a 124-residue protein sequence, read N- to C-terminus: Fluoride-specific ion channel FluC (124 aa).

4 helical membrane-spanning segments follow: residues 1–21 (MGVV…RFLL), 35–55 (VGTL…FAYL), 68–88 (LLIT…YESF), and 99–119 (FLAY…LGYI). The Na(+) site is built by G75 and T78.

Belongs to the fluoride channel Fluc/FEX (TC 1.A.43) family.

The protein resides in the cell inner membrane. It carries out the reaction fluoride(in) = fluoride(out). With respect to regulation, na(+) is not transported, but it plays an essential structural role and its presence is essential for fluoride channel function. Its function is as follows. Fluoride-specific ion channel. Important for reducing fluoride concentration in the cell, thus reducing its toxicity. The chain is Fluoride-specific ion channel FluC from Aquifex aeolicus (strain VF5).